Here is an 898-residue protein sequence, read N- to C-terminus: Chloride channel protein 2 (898 aa).

Ala-2 carries the post-translational modification N-acetylalanine. Topologically, residues 2 to 87 (AAAAAEEGME…RCHKFLVSRV (86 aa)) are cytoplasmic. Positions 16-34 (QYEQTLMYGRYTQDLGAFA) are essential for channel gating by both voltage and cell volume. Residue Thr-20 is modified to Phosphothreonine. The segment at 36 to 49 (EEAARIRLGGPEPW) is modulates channel gating by both voltage and cell volume. The next 2 helical transmembrane spans lie at 88–121 (GEDW…AQQW) and 130–155 (ILLQ…TQIL). The Selectivity filter part_1 motif lies at 161-165 (GSGIP). A chloride-binding site is contributed by Ser-162. Residues 164-171 (IPEMKTIL) constitute an intramembrane region (helical). 2 helical membrane passes run 180-198 (LTLK…ALGS) and 205-223 (EGPF…SKFL). Positions 203 to 207 (GKEGP) match the Selectivity filter part_2 motif. 2 intramembrane regions (helical) span residues 239–251 (MLAA…VGCC) and 255–263 (PIGGVLFSI). The next 5 helical transmembrane spans lie at 275–295 (YWRG…LAVW), 321–349 (LPAF…VQVM), 358–377 (FLMR…ISTL), 429–449 (ANVF…SALA), and 457–480 (GAFM…MAAW). Positions 457–461 (GAFMP) match the Selectivity filter part_3 motif. Position 459 (Phe-459) interacts with chloride. Positions 497–511 (GGYAVVGAAALAGAV) form an intramembrane region, helical. The segment at residues 512–513 (TH) is an intramembrane region (note=Loop between two helices). Residues 514-525 (TVSTAVIVFELT) constitute an intramembrane region (helical). The note=Loop between two helices intramembrane region spans 526–530 (GQIAH). The chain crosses the membrane as a helical span at residues 531–548 (ILPVMIAVILANAVAQSL). Residues 549-898 (QPSLYDSIIR…SPSDSDDKCQ (350 aa)) are Cytoplasmic-facing. Tyr-553 provides a ligand contact to chloride. In terms of domain architecture, CBS 1 spans 584–642 (MVRDVPHVALSCTFRDLRLALHRTKGRMLALVESPESMILLGSIERSQVVALLGAQLSP). Disordered regions lie at residues 643–672 (ARRR…PEAS) and 686–717 (AARG…TGSA). Residues 705–717 (VTRNLGESPTGSA) show a composition bias toward polar residues. Residues Ser-712 and Ser-758 each carry the phosphoserine modification. Residues 790-850 (IDPAPFQLVE…GSVTAQGVKV (61 aa)) form the CBS 2 domain. The Basolateral membrane sorting motif lies at 812–813 (LL). Residues 856–898 (SFRDSATSSSDTETTEVHALWGPHSRHGLPREGSPSDSDDKCQ) are disordered.

It belongs to the chloride channel (TC 2.A.49) family. ClC-2/CLCN2 subfamily. As to quaternary structure, homodimer. Interacts with auxiliary subunit HEPACAM. Phosphorylated. Activated by dephosphorylation. Ubiquitously expressed. Moderately expressed in aortic and coronary vascular smooth muscle cells and expressed at a low level in aortic endothelial cells. Expressed in the adrenal gland, predominantly in the zona glomerulosa. Expressed in white mater perivascular astrocytes and ependymal cells (at protein level).

It is found in the cell membrane. The protein localises to the basolateral cell membrane. The protein resides in the cell projection. It localises to the dendritic spine membrane. Its subcellular location is the axon. The enzyme catalyses chloride(in) = chloride(out). It catalyses the reaction thiocyanate(in) = thiocyanate(out). The catalysed reaction is bromide(in) = bromide(out). It carries out the reaction nitrate(in) = nitrate(out). The enzyme catalyses iodide(out) = iodide(in). Its activity is regulated as follows. Common gate kinetics are down-regulated by intracellular ATP. Inhibited by AK-42, a derivative of meclofenamate. Inhibited by Cd(2+). Inhibited by Zn(2+) and PKC activation. Inhibited at acidic pH. CCLN2:HEPACAM channel conductance is up-regulated upon hypo-osmolarity. In terms of biological role, voltage-gated and osmosensitive chloride channel. Forms a homodimeric channel where each subunit has its own ion conduction pathway. Conducts double-barreled currents controlled by two types of gates, two fast glutamate gates that control each subunit independently and a slow common gate that opens and shuts off both subunits simultaneously. Displays inward rectification currents activated upon membrane hyperpolarization and extracellular hypotonicity. Contributes to chloride conductance involved in neuron excitability. In hippocampal neurons, generates a significant part of resting membrane conductance and provides an additional chloride efflux pathway to prevent chloride accumulation in dendrites upon GABA receptor activation. In glia, associates with the auxiliary subunit HEPACAM/GlialCAM at astrocytic processes and myelinated fiber tracts where it may regulate transcellular chloride flux buffering extracellular chloride and potassium concentrations. Regulates aldosterone production in adrenal glands. The opening of CLCN2 channels at hyperpolarized membrane potentials in the glomerulosa causes cell membrane depolarization, activation of voltage-gated calcium channels and increased expression of aldosterone synthase, the rate-limiting enzyme for aldosterone biosynthesis. Contributes to chloride conductance in retinal pigment epithelium involved in phagocytosis of shed photoreceptor outer segments and photoreceptor renewal. Conducts chloride currents at the basolateral membrane of epithelial cells with a role in chloride reabsorption rather than secretion. Permeable to small monovalent anions with chloride &gt; thiocyanate &gt; bromide &gt; nitrate &gt; iodide ion selectivity. This is Chloride channel protein 2 from Homo sapiens (Human).